The following is a 734-amino-acid chain: Phosphoribosylformylglycinamidine synthase subunit PurL (734 aa).

Histidine 46 is a catalytic residue. Residues tyrosine 49 and lysine 88 each contribute to the ATP site. Residue glutamate 90 participates in Mg(2+) binding. Residues 91–94 (SHNH) and arginine 113 contribute to the substrate site. Histidine 92 functions as the Proton acceptor in the catalytic mechanism. A Mg(2+)-binding site is contributed by aspartate 114. Glutamine 237 is a substrate binding site. Aspartate 265 is a binding site for Mg(2+). 309 to 311 (ESQ) lines the substrate pocket. ATP is bound by residues aspartate 489 and glycine 526. Asparagine 527 serves as a coordination point for Mg(2+). Serine 529 contributes to the substrate binding site.

Belongs to the FGAMS family. Monomer. Part of the FGAM synthase complex composed of 1 PurL, 1 PurQ and 2 PurS subunits.

It localises to the cytoplasm. It carries out the reaction N(2)-formyl-N(1)-(5-phospho-beta-D-ribosyl)glycinamide + L-glutamine + ATP + H2O = 2-formamido-N(1)-(5-O-phospho-beta-D-ribosyl)acetamidine + L-glutamate + ADP + phosphate + H(+). It functions in the pathway purine metabolism; IMP biosynthesis via de novo pathway; 5-amino-1-(5-phospho-D-ribosyl)imidazole from N(2)-formyl-N(1)-(5-phospho-D-ribosyl)glycinamide: step 1/2. Its function is as follows. Part of the phosphoribosylformylglycinamidine synthase complex involved in the purines biosynthetic pathway. Catalyzes the ATP-dependent conversion of formylglycinamide ribonucleotide (FGAR) and glutamine to yield formylglycinamidine ribonucleotide (FGAM) and glutamate. The FGAM synthase complex is composed of three subunits. PurQ produces an ammonia molecule by converting glutamine to glutamate. PurL transfers the ammonia molecule to FGAR to form FGAM in an ATP-dependent manner. PurS interacts with PurQ and PurL and is thought to assist in the transfer of the ammonia molecule from PurQ to PurL. This is Phosphoribosylformylglycinamidine synthase subunit PurL from Gluconobacter oxydans (strain 621H) (Gluconobacter suboxydans).